The chain runs to 82 residues: RNA-binding protein Hfq (82 aa).

A Sm domain is found at 11–71 (DTFLNSVRKS…ISTIMPAQPV (61 aa)).

It belongs to the Hfq family. Homohexamer.

Its function is as follows. RNA chaperone that binds small regulatory RNA (sRNAs) and mRNAs to facilitate mRNA translational regulation in response to envelope stress, environmental stress and changes in metabolite concentrations. Also binds with high specificity to tRNAs. In Caulobacter vibrioides (strain ATCC 19089 / CIP 103742 / CB 15) (Caulobacter crescentus), this protein is RNA-binding protein Hfq.